The sequence spans 287 residues: 3-methyl-2-oxobutanoate hydroxymethyltransferase (287 aa).

The Mg(2+) site is built by aspartate 57 and aspartate 96. Residues 57-58 (DS), aspartate 96, and lysine 125 contribute to the 3-methyl-2-oxobutanoate site. Glutamate 127 is a binding site for Mg(2+). The active-site Proton acceptor is the glutamate 194.

Belongs to the PanB family. Homodecamer; pentamer of dimers. The cofactor is Mg(2+).

It is found in the cytoplasm. The enzyme catalyses 3-methyl-2-oxobutanoate + (6R)-5,10-methylene-5,6,7,8-tetrahydrofolate + H2O = 2-dehydropantoate + (6S)-5,6,7,8-tetrahydrofolate. It participates in cofactor biosynthesis; (R)-pantothenate biosynthesis; (R)-pantoate from 3-methyl-2-oxobutanoate: step 1/2. Its function is as follows. Catalyzes the reversible reaction in which hydroxymethyl group from 5,10-methylenetetrahydrofolate is transferred onto alpha-ketoisovalerate to form ketopantoate. The sequence is that of 3-methyl-2-oxobutanoate hydroxymethyltransferase from Methylobacterium sp. (strain 4-46).